A 983-amino-acid chain; its full sequence is UPF0746 protein DDB_G0280809 (983 aa).

Over residues 1–21 (MISNKRKEIDTINEHHEKNND) the composition is skewed to basic and acidic residues. Residues 1-26 (MISNKRKEIDTINEHHEKNNDDSDGI) form a disordered region. Positions 42–76 (SGSTNYRELQIIAKSLGLASNGKKQLVYNRIEGYF) constitute an SAP domain. The segment at 391–413 (HTTPTSTSTSTSTSTSTYTSTST) is disordered. Residues 392-413 (TTPTSTSTSTSTSTSTYTSTST) are compositionally biased toward low complexity.

The protein belongs to the UPF0746 family.

The protein is UPF0746 protein DDB_G0280809 of Dictyostelium discoideum (Social amoeba).